We begin with the raw amino-acid sequence, 500 residues long: MGRVGLGVAVGCAAVTCAIAAALVARRASARARWRRAVALLREFEEGCATPPARLRQVVDAMVVEMHAGLASDGGSKLKMLLTFVDALPSGSEEGVYYSIDLGGTNFRVLRVQVGAGSVIVNQKVEQQPIPEELTKGTTEGLFNFVALALKNFLEGEDDQDGKMALGFTFSFPVRQISVSSGSLIRWTKGFSIRDTVGRDVAQCLNEALANCGLNVRVTALVNDTVGTLALGHYYDEDTVAAVIIGSGTNACYIERTDAIIKCQGLLTNSGGMVVNMEWGNFWSSHLPRTPYDILLDDETHNRNDQGFEKMISGMYLGEIARLVFHRMAQESDVFGDAADSLSNPFILSTPFLAAIREDDSPDLSEVRRILREHLKIPDAPLKTRRLVVKVCDIVTRRAARLAAAGIVGILKKLGRDGSGAASSGRGRGQPRRTVVAIEGGLYQGYPVFREYLDEALVEILGEEVARNVTLRVTEDGSGVGAALLAAVHSSNRQQQGGPI.

The helical transmembrane segment at 4–24 threads the bilayer; the sequence is VGLGVAVGCAAVTCAIAAALV. The Hexokinase domain maps to 35-487; that stretch reads RRAVALLREF…SGVGAALLAA (453 aa). The hexokinase small subdomain stretch occupies residues 90–222; it reads SGSEEGVYYS…GLNVRVTALV (133 aa). 3 residues coordinate ADP: glycine 104, threonine 105, and asparagine 106. Threonine 188, lysine 189, asparagine 223, and aspartate 224 together coordinate D-glucose. Residues 223-476 are hexokinase large subdomain; the sequence is NDTVGTLALG…RNVTLRVTED (254 aa). Residue serine 247 participates in ADP binding. Residues asparagine 250, glutamate 278, and glutamate 309 each contribute to the D-glucose site. Glycine 441 contributes to the ADP binding site.

The protein belongs to the hexokinase family. As to expression, expressed in roots, leaves, flowers, immature seeds and seed coat. Expressed in young shoots, tiller buds, endosperm seven days after fertilization, and interconnecting tissues such as pulvini and nodes.

The protein localises to the mitochondrion outer membrane. It carries out the reaction a D-hexose + ATP = a D-hexose 6-phosphate + ADP + H(+). It catalyses the reaction D-fructose + ATP = D-fructose 6-phosphate + ADP + H(+). The enzyme catalyses D-glucose + ATP = D-glucose 6-phosphate + ADP + H(+). It functions in the pathway carbohydrate metabolism; hexose metabolism. Its pathway is carbohydrate degradation; glycolysis; D-glyceraldehyde 3-phosphate and glycerone phosphate from D-glucose: step 1/4. Its function is as follows. Fructose and glucose phosphorylating enzyme. Involved in the regulation of cell expansion in spikelet hulls, grain size, and gibberellin biosynthesis and homeostasis. This is Hexokinase-3 from Oryza sativa subsp. japonica (Rice).